The chain runs to 179 residues: SCAN domain-containing protein 1 (179 aa).

Residues 1-104 (MAATEPILAA…PGPAGSRLGP (104 aa)) are disordered. A compositionally biased stretch (low complexity) spans 52-80 (SPNAAVPEAIPTPRAAASAALELPLGPAP). Positions 108–166 (RQRFRQFRYQDAAGPREAFRQLRELSRQWLRPDIRTKEQIVEMLVQEQLLAILPEAARA) constitute an SCAN box domain.

Interacts with ZNF202.

Its subcellular location is the nucleus. May regulate transcriptional activity. This Homo sapiens (Human) protein is SCAN domain-containing protein 1 (SCAND1).